The chain runs to 101 residues: Urease subunit beta (101 aa).

It belongs to the urease beta subunit family. In terms of assembly, heterotrimer of UreA (gamma), UreB (beta) and UreC (alpha) subunits. Three heterotrimers associate to form the active enzyme.

Its subcellular location is the cytoplasm. It catalyses the reaction urea + 2 H2O + H(+) = hydrogencarbonate + 2 NH4(+). It participates in nitrogen metabolism; urea degradation; CO(2) and NH(3) from urea (urease route): step 1/1. The sequence is that of Urease subunit beta from Burkholderia mallei (strain NCTC 10247).